We begin with the raw amino-acid sequence, 112 residues long: MVGNAYTLFEGNSADDLYKAIVKKRTTYEGKPTPLYQAILWSYKVVYTSEKKLIKSLIFRIGDNTIDSIKLYKKILGVFGGFIYILTPLPIVSGFLGNYYLKKKAKEKMKEV.

The chain crosses the membrane as a helical span at residues 75–95 (ILGVFGGFIYILTPLPIVSGF).

The protein localises to the membrane. This is an uncharacterized protein from Methanocaldococcus jannaschii (strain ATCC 43067 / DSM 2661 / JAL-1 / JCM 10045 / NBRC 100440) (Methanococcus jannaschii).